Here is a 181-residue protein sequence, read N- to C-terminus: ATP-dependent protease subunit HslV (181 aa).

The active site involves threonine 6. Na(+) contacts are provided by alanine 162, cysteine 165, and threonine 168.

The protein belongs to the peptidase T1B family. HslV subfamily. As to quaternary structure, a double ring-shaped homohexamer of HslV is capped on each side by a ring-shaped HslU homohexamer. The assembly of the HslU/HslV complex is dependent on binding of ATP.

It localises to the cytoplasm. The enzyme catalyses ATP-dependent cleavage of peptide bonds with broad specificity.. Its activity is regulated as follows. Allosterically activated by HslU binding. Protease subunit of a proteasome-like degradation complex believed to be a general protein degrading machinery. The protein is ATP-dependent protease subunit HslV of Solidesulfovibrio magneticus (strain ATCC 700980 / DSM 13731 / RS-1) (Desulfovibrio magneticus).